We begin with the raw amino-acid sequence, 449 residues long: Transport protein ComB (449 aa).

The Cytoplasmic segment spans residues 1–20 (MKPEFLESAEFYNRRYHNFS). A helical transmembrane segment spans residues 21–41 (SSVIVPMALLLVFLLGFATVA). The Extracellular segment spans residues 42-449 (EKEMSLSTRA…YYLDQFLNKE (408 aa)).

The protein belongs to the membrane fusion protein (MFP) (TC 8.A.1) family.

The protein resides in the cell membrane. Functionally, required for induction of competence. The chain is Transport protein ComB (comB) from Streptococcus pneumoniae (strain ATCC BAA-255 / R6).